A 603-amino-acid polypeptide reads, in one-letter code: NADH-ubiquinone oxidoreductase chain 5 (603 aa).

16 helical membrane passes run 4–24 (YATM…GALI), 38–58 (SIIA…MCLD), 87–107 (MTFI…SLWY), 122–142 (LIFL…QLFI), 144–160 (WEGV…WWYA), 171–191 (AILY…WFLL), 211–233 (TPLL…HPWL), 241–261 (TPVS…FLLI), 272–292 (LIQT…AVCA), 301–320 (IVAF…IGIN), 325–347 (AFLH…GSII), 370–390 (STSL…TGFY), 405–422 (NAWA…TSAY), 457–477 (LTIG…PMST), 482–502 (IPLY…LTAL), and 582–602 (GMIK…LLLI).

Belongs to the complex I subunit 5 family. As to quaternary structure, core subunit of respiratory chain NADH dehydrogenase (Complex I) which is composed of 45 different subunits.

The protein resides in the mitochondrion inner membrane. It catalyses the reaction a ubiquinone + NADH + 5 H(+)(in) = a ubiquinol + NAD(+) + 4 H(+)(out). Functionally, core subunit of the mitochondrial membrane respiratory chain NADH dehydrogenase (Complex I) which catalyzes electron transfer from NADH through the respiratory chain, using ubiquinone as an electron acceptor. Essential for the catalytic activity and assembly of complex I. This chain is NADH-ubiquinone oxidoreductase chain 5 (MT-ND5), found in Pan troglodytes (Chimpanzee).